We begin with the raw amino-acid sequence, 469 residues long: tRNA(Ile)-lysidine synthase (469 aa).

26–31 provides a ligand contact to ATP; sequence SGGPDS.

Belongs to the tRNA(Ile)-lysidine synthase family.

It localises to the cytoplasm. It catalyses the reaction cytidine(34) in tRNA(Ile2) + L-lysine + ATP = lysidine(34) in tRNA(Ile2) + AMP + diphosphate + H(+). Ligates lysine onto the cytidine present at position 34 of the AUA codon-specific tRNA(Ile) that contains the anticodon CAU, in an ATP-dependent manner. Cytidine is converted to lysidine, thus changing the amino acid specificity of the tRNA from methionine to isoleucine. The sequence is that of tRNA(Ile)-lysidine synthase from Clostridium perfringens (strain 13 / Type A).